Here is a 513-residue protein sequence, read N- to C-terminus: Cytochrome P450 1A2 (513 aa).

An O-linked (GlcNAc) serine glycan is attached at Ser68. Phe225 is a binding site for substrate. Heme is bound at residue Cys456.

It belongs to the cytochrome P450 family. Interacts with PGRMC1; the interaction requires PGRMC1 homodimerization. It depends on heme as a cofactor. As to expression, found in lung and liver.

It localises to the endoplasmic reticulum membrane. The protein localises to the microsome membrane. The catalysed reaction is an organic molecule + reduced [NADPH--hemoprotein reductase] + O2 = an alcohol + oxidized [NADPH--hemoprotein reductase] + H2O + H(+). It catalyses the reaction 17beta-estradiol + reduced [NADPH--hemoprotein reductase] + O2 = 2-hydroxy-17beta-estradiol + oxidized [NADPH--hemoprotein reductase] + H2O + H(+). It carries out the reaction 17beta-estradiol + reduced [NADPH--hemoprotein reductase] + O2 = 4-hydroxy-17beta-estradiol + oxidized [NADPH--hemoprotein reductase] + H2O + H(+). The enzyme catalyses estrone + reduced [NADPH--hemoprotein reductase] + O2 = 2-hydroxyestrone + oxidized [NADPH--hemoprotein reductase] + H2O + H(+). The catalysed reaction is estrone + reduced [NADPH--hemoprotein reductase] + O2 = 4-hydroxyestrone + oxidized [NADPH--hemoprotein reductase] + H2O + H(+). It catalyses the reaction cholesterol + reduced [NADPH--hemoprotein reductase] + O2 = 25-hydroxycholesterol + oxidized [NADPH--hemoprotein reductase] + H2O + H(+). It carries out the reaction all-trans-retinol + reduced [NADPH--hemoprotein reductase] + O2 = all-trans-retinal + oxidized [NADPH--hemoprotein reductase] + 2 H2O + H(+). The enzyme catalyses all-trans-retinal + reduced [NADPH--hemoprotein reductase] + O2 = all-trans-retinoate + oxidized [NADPH--hemoprotein reductase] + H2O + 2 H(+). The catalysed reaction is (5Z,8Z,11Z,14Z)-eicosatetraenoate + reduced [NADPH--hemoprotein reductase] + O2 = (14R,15S)-epoxy-(5Z,8Z,11Z)-eicosatrienoate + oxidized [NADPH--hemoprotein reductase] + H2O + H(+). It catalyses the reaction (5Z,8Z,11Z,14Z)-eicosatetraenoate + reduced [NADPH--hemoprotein reductase] + O2 = (14S,15R)-epoxy-(5Z,8Z,11Z)-eicosatrienoate + oxidized [NADPH--hemoprotein reductase] + H2O + H(+). It carries out the reaction (5Z,8Z,11Z,14Z,17Z)-eicosapentaenoate + reduced [NADPH--hemoprotein reductase] + O2 = (17R,18S)-epoxy-(5Z,8Z,11Z,14Z)-eicosatetraenoate + oxidized [NADPH--hemoprotein reductase] + H2O + H(+). The enzyme catalyses (4Z,7Z,10Z,13Z,16Z,19Z)-docosahexaenoate + reduced [NADPH--hemoprotein reductase] + O2 = (19R,20S)-epoxy-(4Z,7Z,10Z,13Z,16Z)-docosapentaenoate + oxidized [NADPH--hemoprotein reductase] + H2O + H(+). The catalysed reaction is (5S)-hydroperoxy-(6E,8Z,11Z,14Z)-eicosatetraenoate = 5-oxo-(6E,8Z,11Z,14Z)-eicosatetraenoate + H2O. It catalyses the reaction (12S)-hydroperoxy-(5Z,8Z,10E,14Z)-eicosatetraenoate = 12-oxo-(5Z,8Z,10E,14Z)-eicosatetraenoate + H2O. It carries out the reaction (15S)-hydroperoxy-(5Z,8Z,11Z,13E)-eicosatetraenoate = 15-oxo-(5Z,8Z,11Z,13E)-eicosatetraenoate + H2O. The enzyme catalyses (13S)-hydroperoxy-(9Z,11E)-octadecadienoate = 13-oxo-(9Z,11E)-octadecadienoate + H2O. The catalysed reaction is (5Z,8Z,11Z,14Z)-eicosatetraenoate + reduced [NADPH--hemoprotein reductase] + O2 = 13-hydroxy-(5Z,8Z,11Z,14Z)-eicosatetraenoate + oxidized [NADPH--hemoprotein reductase] + H2O + H(+). It catalyses the reaction (5Z,8Z,11Z,14Z)-eicosatetraenoate + reduced [NADPH--hemoprotein reductase] + O2 = 19-hydroxy-(5Z,8Z,11Z,14Z)-eicosatetraenoate + oxidized [NADPH--hemoprotein reductase] + H2O + H(+). It carries out the reaction (9Z,12Z)-octadecadienoate + reduced [NADPH--hemoprotein reductase] + O2 = 11-hydroxy-(9Z,12Z)-octadecadienoate + oxidized [NADPH--hemoprotein reductase] + H2O + H(+). It participates in cofactor metabolism; retinol metabolism. The protein operates within steroid metabolism; cholesterol metabolism. Its pathway is lipid metabolism; arachidonate metabolism. A cytochrome P450 monooxygenase involved in the metabolism of various endogenous substrates, including fatty acids, steroid hormones and vitamins. Mechanistically, uses molecular oxygen inserting one oxygen atom into a substrate, and reducing the second into a water molecule, with two electrons provided by NADPH via cytochrome P450 reductase (NADPH--hemoprotein reductase). Catalyzes the hydroxylation of carbon-hydrogen bonds. Exhibits high catalytic activity for the formation of hydroxyestrogens from estrone (E1) and 17beta-estradiol (E2), namely 2-hydroxy E1 and E2. Metabolizes cholesterol toward 25-hydroxycholesterol, a physiological regulator of cellular cholesterol homeostasis. May act as a major enzyme for all-trans retinoic acid biosynthesis in the liver. Catalyzes two successive oxidative transformation of all-trans retinol to all-trans retinal and then to the active form all-trans retinoic acid. Primarily catalyzes stereoselective epoxidation of the last double bond of polyunsaturated fatty acids (PUFA), displaying a strong preference for the (R,S) stereoisomer. Catalyzes bisallylic hydroxylation and omega-1 hydroxylation of PUFA. May also participate in eicosanoids metabolism by converting hydroperoxide species into oxo metabolites (lipoxygenase-like reaction, NADPH-independent). Plays a role in the oxidative metabolism of xenobiotics. Catalyzes the N-hydroxylation of heterocyclic amines and the O-deethylation of phenacetin. Metabolizes caffeine via N3-demethylation. The sequence is that of Cytochrome P450 1A2 (CYP1A2) from Mesocricetus auratus (Golden hamster).